A 260-amino-acid polypeptide reads, in one-letter code: Phosphatidylglycerol--prolipoprotein diacylglyceryl transferase (260 aa).

3 helical membrane-spanning segments follow: residues 16 to 36 (LEFR…YFIV), 55 to 75 (VIFS…ILFY), and 87 to 107 (LFAV…VILA). A 1,2-diacyl-sn-glycero-3-phospho-(1'-sn-glycerol) is bound at residue arginine 138. Helical transmembrane passes span 198–218 (GVVF…VEFF) and 232–252 (FSMG…MAVL).

The protein belongs to the Lgt family.

The protein localises to the cell inner membrane. The catalysed reaction is L-cysteinyl-[prolipoprotein] + a 1,2-diacyl-sn-glycero-3-phospho-(1'-sn-glycerol) = an S-1,2-diacyl-sn-glyceryl-L-cysteinyl-[prolipoprotein] + sn-glycerol 1-phosphate + H(+). It functions in the pathway protein modification; lipoprotein biosynthesis (diacylglyceryl transfer). Its function is as follows. Catalyzes the transfer of the diacylglyceryl group from phosphatidylglycerol to the sulfhydryl group of the N-terminal cysteine of a prolipoprotein, the first step in the formation of mature lipoproteins. The sequence is that of Phosphatidylglycerol--prolipoprotein diacylglyceryl transferase from Geobacter sulfurreducens (strain ATCC 51573 / DSM 12127 / PCA).